Consider the following 121-residue polypeptide: Parathyroid hormone-related protein (121 aa).

The N-terminal stretch at 1–14 (VGVFLLSYSVPSCG) is a signal peptide. Residues 15-24 (RSVEELGRRL) constitute a propeptide that is removed on maturation. The segment at 47-58 (RFFLHHLIAEIH) is important for receptor binding. The tract at residues 61 to 121 (EIRATSEVSP…PGKKKKGKPG (61 aa)) is disordered. Residues 66-80 (SEVSPNSKPAPNTKN) show a composition bias toward polar residues. The short motif at 98 to 119 (TNKVETYKEQPLKTPGKKKKGK) is the Nuclear localization signal element. Residues 99 to 108 (NKVETYKEQP) show a composition bias toward basic and acidic residues. A compositionally biased stretch (basic residues) spans 112–121 (PGKKKKGKPG).

It belongs to the parathyroid hormone family. In terms of assembly, PTHrP interacts with PTH1R (via N-terminal extracellular domain).

It localises to the secreted. Its subcellular location is the cytoplasm. It is found in the nucleus. Neuroendocrine peptide which is a critical regulator of cellular and organ growth, development, migration, differentiation and survival and of epithelial calcium ion transport. Acts by binding to its receptor, PTH1R, activating G protein-coupled receptor signaling. Regulates endochondral bone development and epithelial-mesenchymal interactions during the formation of the mammary glands and teeth. Required for skeletal homeostasis. Promotes mammary mesenchyme differentiation and bud outgrowth by modulating mesenchymal cell responsiveness to BMPs. Up-regulates BMPR1A expression in the mammary mesenchyme and this increases the sensitivity of these cells to BMPs and allows them to respond to BMP4 in a paracrine and/or autocrine fashion. BMP4 signaling in the mesenchyme, in turn, triggers epithelial outgrowth and augments MSX2 expression, which causes the mammary mesenchyme to inhibit hair follicle formation within the nipple sheath. The protein is Parathyroid hormone-related protein (PTHLH) of Ovis aries (Sheep).